The primary structure comprises 194 residues: MSDEIKQIAALIGHHQALEKRVTSLTEQFQAASSQLQQQSETLSRVIRELDSASGNMTDTVRKSVSSALTQVEKELKQAGLAQQKPATEALNQAADTAKAMIHEMRREMSRYTWKSAIYLVLTIFFVLASCVTAFTWFMNDGYSQIAEMQRMEAVWQKKAPLADISRCDGKPCVKVDTRTTYGDKENTWMIIKK.

This protein is probably required for relaxation complex formation. This is 22 kDa relaxation protein from Salmonella typhimurium.